Here is a 144-residue protein sequence, read N- to C-terminus: Glycophorin-A (144 aa).

The segment covering 1 to 25 has biased composition (polar residues); sequence SSTTVPATHTSSSSLGPEQYVSSQS. A disordered region spans residues 1–55; it reads SSTTVPATHTSSSSLGPEQYVSSQSNDKHTSDSHPTPTSAHEVTTEFSGRTHYPP. S2 carries O-linked (GalNAc...) serine glycosylation. O-linked (GalNAc...) threonine glycosylation is found at T3, T4, T8, and T10. O-linked (GalNAc...) serine glycosylation is found at S11, S12, S13, S14, S22, and S23. O-linked (GalNAc...) threonine glycosylation is found at T30, T36, T38, T44, and T45. Residues 33–48 show a composition bias toward polar residues; the sequence is SHPTPTSAHEVTTEFS. The O-linked (GalNAc...) serine glycan is linked to S48. A glycan (O-linked (GalNAc...) threonine) is linked at T51. A helical transmembrane segment spans residues 70 to 92; the sequence is LVIALIIFGVMAGVIGTILFISY. The disordered stretch occupies residues 101–144; that stretch reads SESDVQPLPPPDAEVPLSSVEIEDPEETDELNSFTKPNQERNES. At S118 the chain carries Phosphoserine. Residues 121 to 130 show a composition bias toward acidic residues; that stretch reads EIEDPEETDE.

The protein belongs to the glycophorin-A family. In terms of assembly, homodimer. Component of the ankyrin-1 complex in the erythrocyte, composed of ANK1, RHCE, RHAG, SLC4A1, EPB42, GYPA, GYPB and AQP1. Interacts with SLC4A1; a GYPA monomer is bound at each end of the SLC4A1 dimer forming a heterotetramer.

The protein resides in the membrane. Its function is as follows. Component of the ankyrin-1 complex, a multiprotein complex involved in the stability and shape of the erythrocyte membrane. Glycophorin A is the major intrinsic membrane protein of the erythrocyte. The N-terminal glycosylated segment, which lies outside the erythrocyte membrane, has MN blood group receptors. Appears to be important for the function of SLC4A1 and is required for high activity of SLC4A1. May be involved in translocation of SLC4A1 to the plasma membrane. The sequence is that of Glycophorin-A from Macaca fuscata fuscata (Japanese macaque).